The following is a 238-amino-acid chain: Ras association domain-containing protein 3 (238 aa).

At Ser-2 the chain carries N-acetylserine. The disordered stretch occupies residues 26 to 48 (RAPQGKPRSGQQDVEKEKETHSY). Basic and acidic residues predominate over residues 38-48 (DVEKEKETHSY). Residues 79-186 (YTGFIKVQME…TLSFVLREHE (108 aa)) enclose the Ras-associating domain. The SARAH domain occupies 187-234 (IGEWEAFSLPELQNFLRILDKEEDEQLQNLKRRYTAYRQKLEEALREV).

Widely expressed.

The protein localises to the cytoplasm. It localises to the cytoskeleton. The sequence is that of Ras association domain-containing protein 3 (RASSF3) from Homo sapiens (Human).